The primary structure comprises 702 residues: Polyribonucleotide nucleotidyltransferase (702 aa).

Mg(2+)-binding residues include Asp487 and Asp493. One can recognise a KH domain in the interval 554 to 613 (PKILTMQINPDKIRDVIGPSGKQINKIIEETGVKIDIEQDGTIFISSVNEEMNKKAKKII). The S1 motif domain occupies 623–691 (GQVYLGKVKR…KQGRVNLSRK (69 aa)).

Belongs to the polyribonucleotide nucleotidyltransferase family. It depends on Mg(2+) as a cofactor.

Its subcellular location is the cytoplasm. The enzyme catalyses RNA(n+1) + phosphate = RNA(n) + a ribonucleoside 5'-diphosphate. Functionally, involved in mRNA degradation. Catalyzes the phosphorolysis of single-stranded polyribonucleotides processively in the 3'- to 5'-direction. In Anoxybacillus flavithermus (strain DSM 21510 / WK1), this protein is Polyribonucleotide nucleotidyltransferase.